The chain runs to 526 residues: Peptide chain release factor 3 (526 aa).

The tr-type G domain occupies 9-277 (DKRRTFAIIS…GIVEWAPKPQ (269 aa)). GTP-binding positions include 18-25 (SHPDAGKT), 86-90 (DTPGH), and 140-143 (NKLD).

The protein belongs to the TRAFAC class translation factor GTPase superfamily. Classic translation factor GTPase family. PrfC subfamily.

It is found in the cytoplasm. Its function is as follows. Increases the formation of ribosomal termination complexes and stimulates activities of RF-1 and RF-2. It binds guanine nucleotides and has strong preference for UGA stop codons. It may interact directly with the ribosome. The stimulation of RF-1 and RF-2 is significantly reduced by GTP and GDP, but not by GMP. The polypeptide is Peptide chain release factor 3 (Shewanella woodyi (strain ATCC 51908 / MS32)).